We begin with the raw amino-acid sequence, 391 residues long: Argininosuccinate synthase (391 aa).

ATP is bound at residue 6 to 14 (AYSGGLDTT). Tyrosine 84 contacts L-citrulline. ATP is bound at residue glycine 114. Threonine 116, asparagine 120, and aspartate 121 together coordinate L-aspartate. Asparagine 120 contributes to the L-citrulline binding site. Arginine 124, serine 171, serine 180, glutamate 253, and tyrosine 265 together coordinate L-citrulline.

This sequence belongs to the argininosuccinate synthase family. Type 1 subfamily. Homotetramer.

Its subcellular location is the cytoplasm. The enzyme catalyses L-citrulline + L-aspartate + ATP = 2-(N(omega)-L-arginino)succinate + AMP + diphosphate + H(+). It participates in amino-acid biosynthesis; L-arginine biosynthesis; L-arginine from L-ornithine and carbamoyl phosphate: step 2/3. The protein is Argininosuccinate synthase of Sulfolobus acidocaldarius (strain ATCC 33909 / DSM 639 / JCM 8929 / NBRC 15157 / NCIMB 11770).